Reading from the N-terminus, the 153-residue chain is Large ribosomal subunit protein uL30 (153 aa).

The protein belongs to the universal ribosomal protein uL30 family. Part of the 50S ribosomal subunit.

The protein is Large ribosomal subunit protein uL30 of Methanocella arvoryzae (strain DSM 22066 / NBRC 105507 / MRE50).